The primary structure comprises 239 residues: BURP domain-containing protein 6 (239 aa).

The N-terminal stretch at 1 to 19 is a signal peptide; that stretch reads MPGAIRDLINPVSSAASAS. The region spanning 28 to 239 is the BURP domain; sequence FFLEKDLFPG…PQDDMLWVRN (212 aa).

As to expression, expressed in leaves and shoot.

This Oryza sativa subsp. japonica (Rice) protein is BURP domain-containing protein 6 (BURP6).